The chain runs to 205 residues: GTP-binding protein rho3 (205 aa).

Residue 20 to 27 coordinates GTP; it reads GDGAAGKT. The short motif at 42–50 is the Effector region element; sequence YEPTIFENY. GTP is bound by residues 67 to 71 and 125 to 128; these read DTAGQ and LKCD. The residue at position 202 (C202) is a Cysteine methyl ester. The S-geranylgeranyl cysteine moiety is linked to residue C202. Residues 203 to 205 constitute a propeptide, removed in mature form; the sequence is IIA.

Belongs to the small GTPase superfamily. Rho family. As to quaternary structure, interacts with for3. Palmitoylated by the erf2-erf4 complex.

The protein resides in the cell membrane. Functionally, involved in controlling cell shape and septation. Regulates cell separation by modulating the function of the exocyst complex. Involved in post-Golgi vesicle transport. Involved in driving sexual development in a palmitoylation-dependent manner. The sequence is that of GTP-binding protein rho3 (rho3) from Schizosaccharomyces pombe (strain 972 / ATCC 24843) (Fission yeast).